Here is a 205-residue protein sequence, read N- to C-terminus: ATP synthase subunit b (205 aa).

A helical membrane pass occupies residues 45-65; it reads LGMTATAWVSLAMVIVILLLL.

It belongs to the ATPase B chain family. F-type ATPases have 2 components, F(1) - the catalytic core - and F(0) - the membrane proton channel. F(1) has five subunits: alpha(3), beta(3), gamma(1), delta(1), epsilon(1). F(0) has three main subunits: a(1), b(2) and c(10-14). The alpha and beta chains form an alternating ring which encloses part of the gamma chain. F(1) is attached to F(0) by a central stalk formed by the gamma and epsilon chains, while a peripheral stalk is formed by the delta and b chains.

It is found in the cell inner membrane. F(1)F(0) ATP synthase produces ATP from ADP in the presence of a proton or sodium gradient. F-type ATPases consist of two structural domains, F(1) containing the extramembraneous catalytic core and F(0) containing the membrane proton channel, linked together by a central stalk and a peripheral stalk. During catalysis, ATP synthesis in the catalytic domain of F(1) is coupled via a rotary mechanism of the central stalk subunits to proton translocation. In terms of biological role, component of the F(0) channel, it forms part of the peripheral stalk, linking F(1) to F(0). The protein is ATP synthase subunit b of Rhizorhabdus wittichii (strain DSM 6014 / CCUG 31198 / JCM 15750 / NBRC 105917 / EY 4224 / RW1) (Sphingomonas wittichii).